A 196-amino-acid polypeptide reads, in one-letter code: Carnitine operon protein CaiE (196 aa).

The disordered stretch occupies residues 173–196 (TQPLRQMEENRPRLQGTTDVTPKR). Residues 187-196 (QGTTDVTPKR) show a composition bias toward polar residues.

This sequence belongs to the transferase hexapeptide repeat family.

It functions in the pathway amine and polyamine metabolism; carnitine metabolism. Functionally, overproduction of CaiE stimulates the activity of CaiB and CaiD. The protein is Carnitine operon protein CaiE of Escherichia coli O139:H28 (strain E24377A / ETEC).